We begin with the raw amino-acid sequence, 515 residues long: 1-pyrroline-5-carboxylate dehydrogenase (515 aa).

Active-site residues include glutamate 286 and cysteine 320.

It belongs to the aldehyde dehydrogenase family. RocA subfamily.

It carries out the reaction L-glutamate 5-semialdehyde + NAD(+) + H2O = L-glutamate + NADH + 2 H(+). The protein operates within amino-acid degradation; L-proline degradation into L-glutamate; L-glutamate from L-proline: step 2/2. The chain is 1-pyrroline-5-carboxylate dehydrogenase from Bacillus anthracis (strain A0248).